The primary structure comprises 34 residues: Beta/mu-theraphotoxin-Pe1b (34 aa).

Intrachain disulfides connect cysteine 2–cysteine 16, cysteine 9–cysteine 21, and cysteine 15–cysteine 28.

It belongs to the neurotoxin 10 (Hwtx-1) family. 54 (ProTx-1) subfamily. Expressed by the venom gland.

Its subcellular location is the secreted. In terms of biological role, ion channel impairing toxin that inhibits several voltage-gated sodium channels. It acts by inhibiting the inward component of the sodium current and by shifting the voltage dependence of channel activation to more depolarized potentials. Its most potent activity is on Nav1.7/SCN9A (IC(50)=167 nM), followed by Nav1.6/SCN8A (IC(50)=696 nM), and Nav1.2/SCN2A (IC(50)=3.54 uM). The sequence is that of Beta/mu-theraphotoxin-Pe1b from Phormingochilus everetti (Malaysian purple earth tiger tarantula).